We begin with the raw amino-acid sequence, 312 residues long: Protein-methionine-sulfoxide reductase catalytic subunit MsrP (312 aa).

A signal peptide (tat-type signal) is located at residues 1-45 (MPVYRPPRIAASEITPERFFLDRRSFLAAAGGLVLGGTGMAHAAA). Residues N69, 72–73 (YE), C126, T161, N211, R216, and 227–229 (GIK) contribute to the Mo-molybdopterin site.

The protein belongs to the MsrP family. In terms of assembly, heterodimer of a catalytic subunit (MsrP) and a heme-binding subunit (MsrQ). Mo-molybdopterin serves as cofactor. In terms of processing, predicted to be exported by the Tat system. The position of the signal peptide cleavage has not been experimentally proven.

It is found in the periplasm. It catalyses the reaction L-methionyl-[protein] + a quinone + H2O = L-methionyl-(S)-S-oxide-[protein] + a quinol. The catalysed reaction is L-methionyl-[protein] + a quinone + H2O = L-methionyl-(R)-S-oxide-[protein] + a quinol. Functionally, part of the MsrPQ system that repairs oxidized periplasmic proteins containing methionine sulfoxide residues (Met-O), using respiratory chain electrons. Thus protects these proteins from oxidative-stress damage caused by reactive species of oxygen and chlorine generated by the host defense mechanisms. MsrPQ is essential for the maintenance of envelope integrity under bleach stress, rescuing a wide series of structurally unrelated periplasmic proteins from methionine oxidation. The catalytic subunit MsrP is non-stereospecific, being able to reduce both (R-) and (S-) diastereoisomers of methionine sulfoxide. This chain is Protein-methionine-sulfoxide reductase catalytic subunit MsrP, found in Sinorhizobium fredii (strain NBRC 101917 / NGR234).